Reading from the N-terminus, the 160-residue chain is Peripheral myelin protein 22 (160 aa).

Position 1 (M1) is a topological domain, cytoplasmic. A helical membrane pass occupies residues 2–31 (LLLLLSIIVLHVAVLVLLFVSTIVSQWIVG). The Extracellular segment spans residues 32–64 (NGHATDLWQNCSTSSSGNVHHCFSSSPNEWLQS). The N-linked (GlcNAc...) asparagine glycan is linked to N41. Residues 65 to 91 (VQATMILSIIFSILSLFLFFCQLFTLT) traverse the membrane as a helical segment. At 92-95 (KGGR) the chain is on the cytoplasmic side. Residues 96–119 (FYITGIFQILAGLCVMSAAAIYTV) form a helical membrane-spanning segment. Residues 120–133 (RHPEWHLNSDYSYG) are Extracellular-facing. The chain crosses the membrane as a helical span at residues 134 to 156 (FAYILAWVAFPLALLSGVIYVIL). Residues 157-160 (RKRE) are Cytoplasmic-facing.

It belongs to the PMP-22/EMP/MP20 family. Post-translationally, ubiquitinated by the DCX(DCAF13) E3 ubiquitin ligase complex, leading to its degradation.

The protein resides in the cell membrane. In terms of biological role, might be involved in growth regulation, and in myelinization in the peripheral nervous system. This Homo sapiens (Human) protein is Peripheral myelin protein 22 (PMP22).